Reading from the N-terminus, the 53-residue chain is Large ribosomal subunit protein eL40 (53 aa).

The protein belongs to the eukaryotic ribosomal protein eL40 family.

This Pyrobaculum aerophilum (strain ATCC 51768 / DSM 7523 / JCM 9630 / CIP 104966 / NBRC 100827 / IM2) protein is Large ribosomal subunit protein eL40.